The primary structure comprises 394 residues: Putative nickel insertion protein (394 aa).

The protein belongs to the LarC family.

This Syntrophotalea carbinolica (strain DSM 2380 / NBRC 103641 / GraBd1) (Pelobacter carbinolicus) protein is Putative nickel insertion protein.